Consider the following 464-residue polypeptide: Cerebellar degeneration-related protein 2-like (464 aa).

Coiled-coil stretches lie at residues Ala31 to Thr154, Val201 to Val264, and Met342 to Gln379. Residues Glu371–Ser419 form a disordered region. The segment covering Val384 to Val395 has biased composition (basic and acidic residues). Pro residues predominate over residues Gln399–Pro409.

The protein belongs to the CDR2 family.

The polypeptide is Cerebellar degeneration-related protein 2-like (cdr2l) (Danio rerio (Zebrafish)).